We begin with the raw amino-acid sequence, 126 residues long: Large ribosomal subunit protein eL8 (126 aa).

Belongs to the eukaryotic ribosomal protein eL8 family. Part of the 50S ribosomal subunit. Probably part of the RNase P complex.

It is found in the cytoplasm. Multifunctional RNA-binding protein that recognizes the K-turn motif in ribosomal RNA, the RNA component of RNase P, box H/ACA, box C/D and box C'/D' sRNAs. The chain is Large ribosomal subunit protein eL8 from Cenarchaeum symbiosum (strain A).